Consider the following 236-residue polypeptide: Small ribosomal subunit protein uS2c (236 aa).

Belongs to the universal ribosomal protein uS2 family.

The protein localises to the plastid. The protein resides in the chloroplast. This chain is Small ribosomal subunit protein uS2c (rps2), found in Phalaenopsis aphrodite subsp. formosana (Moth orchid).